The sequence spans 124 residues: Late histone H2B.2.2 (124 aa).

Residues 1-32 (MPAKQTSGKGAKKAGKAKGRPSGASKTRRRKR) form a disordered region. A compositionally biased stretch (basic residues) spans 10 to 19 (GAKKAGKAKG). A glycan (O-linked (GlcNAc) serine) is linked at Ser-111. Lys-119 is covalently cross-linked (Glycyl lysine isopeptide (Lys-Gly) (interchain with G-Cter in ubiquitin)).

This sequence belongs to the histone H2B family. In terms of assembly, the nucleosome is a histone octamer containing two molecules each of H2A, H2B, H3 and H4 assembled in one H3-H4 heterotetramer and two H2A-H2B heterodimers. The octamer wraps approximately 147 bp of DNA. Post-translationally, monoubiquitination of Lys-119 gives a specific tag for epigenetic transcriptional activation and is also prerequisite for histone H3 'Lys-4' and 'Lys-79' methylation. GlcNAcylation at Ser-111 promotes monoubiquitination of Lys-119. It fluctuates in response to extracellular glucose, and associates with transcribed genes.

It is found in the nucleus. It localises to the chromosome. Functionally, core component of nucleosome. Nucleosomes wrap and compact DNA into chromatin, limiting DNA accessibility to the cellular machineries which require DNA as a template. Histones thereby play a central role in transcription regulation, DNA repair, DNA replication and chromosomal stability. DNA accessibility is regulated via a complex set of post-translational modifications of histones, also called histone code, and nucleosome remodeling. This is Late histone H2B.2.2 from Psammechinus miliaris (Green sea urchin).